The following is a 189-amino-acid chain: Small ribosomal subunit protein uS7 (189 aa).

This sequence belongs to the universal ribosomal protein uS7 family. As to quaternary structure, part of the 30S ribosomal subunit.

In terms of biological role, one of the primary rRNA binding proteins, it binds directly to 16S rRNA where it nucleates assembly of the head domain of the 30S subunit. Is located at the subunit interface close to the decoding center. In Methanosarcina mazei (strain ATCC BAA-159 / DSM 3647 / Goe1 / Go1 / JCM 11833 / OCM 88) (Methanosarcina frisia), this protein is Small ribosomal subunit protein uS7.